Reading from the N-terminus, the 804-residue chain is MAENSESLGTVPEHERILQEIESTDTACVGPTLRSVYDDQPNAHKKFMEKLDACIRNHDKEIEKMCNFHHQGFVDAITELLKVRTDAEKLKVQVTDTNRRFQDAGKEVIVHTEDIIRCRIQQRNITTVVEKLQLCLPVLEMYSKLKEQMSAKRYYSALKTMEQLENVYFPWVSQYRFCQLMIENLPKLREDIKEISMSDLKDFLESIRKHSDKIGETAMKQAQHQKTFSVSLQKQNKMKFGKNMYINRDRIPEERNETVLKHSLEEEDENEEEILTVQDLVDFSPVYRCLHIYSVLGDEETFENYYRKQRKKQARLVLQPQSNMHETVDGYRRYFTQIVGFFVVEDHILHVTQGLVTRAYTDELWNMALSKIIAVLRAHSSYCTDPDLVLELKNLTVIFADTLQGYGFPVNRLFDLLFEIRDQYNETLLKKWAGVFRDIFEEDNYSPIPVVNEEEYKIVISKFPFQDPDLEKQSFPKKFPMSQSVPHIYIQVKEFIYASLKFSESLHRSSTEIDDMLRKSTNLLLTRTLSSCLLNLIRKPHIGLTELVQIIINTTHLEQACKYLEDFITNITNISQETVHTTRLYGLSTFKDARHAAEGEIYTKLNQKIDEFVQLADYDWTMSEPDGRASGYLMDLINFLRSIFQVFTHLPGKVAQTACMSACQHLSTSLMQMLLDSELKQISMGAVQQFNLDVIQCELFASSEPVPGFQGDTLQLAFIDLRQLLDLFMVWDWSTYLADYGQPASKYLRVNPNTALTLLEKMKDTSKKNNIFAQFRKNDRDKQKLIETVVKQLRSLVNGMSQHM.

It belongs to the SEC15 family. In terms of assembly, the exocyst complex is composed of EXOC1, EXOC2, EXOC3, EXOC4, EXOC5, EXOC6, EXOC7 and EXOC8. Interacts with CNTRL. Interacts with RAB11A in a GTP-dependent manner.

Its subcellular location is the cytoplasm. The protein resides in the perinuclear region. It is found in the cell projection. It localises to the growth cone. The protein localises to the midbody. Its subcellular location is the midbody ring. Component of the exocyst complex involved in the docking of exocytic vesicles with fusion sites on the plasma membrane. Together with RAB11A, RAB3IP, RAB8A, PARD3, PRKCI, ANXA2, CDC42 and DNMBP promotes transcytosis of PODXL to the apical membrane initiation sites (AMIS), apical surface formation and lumenogenesis. The protein is Exocyst complex component 6 (EXOC6) of Homo sapiens (Human).